Reading from the N-terminus, the 539-residue chain is Phosphoenolpyruvate carboxykinase (ATP) (539 aa).

Residues arginine 64, tyrosine 206, and lysine 212 each coordinate substrate. ATP contacts are provided by residues lysine 212, histidine 231, and 247-255 (GLSGTGKTT). Mn(2+)-binding residues include lysine 212 and histidine 231. Aspartate 268 lines the Mn(2+) pocket. ATP-binding positions include glutamate 296, arginine 332, 448-449 (RI), and threonine 454. A substrate-binding site is contributed by arginine 332.

It belongs to the phosphoenolpyruvate carboxykinase (ATP) family. Monomer. The cofactor is Mn(2+).

It is found in the cytoplasm. It catalyses the reaction oxaloacetate + ATP = phosphoenolpyruvate + ADP + CO2. The protein operates within carbohydrate biosynthesis; gluconeogenesis. In terms of biological role, involved in the gluconeogenesis. Catalyzes the conversion of oxaloacetate (OAA) to phosphoenolpyruvate (PEP) through direct phosphoryl transfer between the nucleoside triphosphate and OAA. The polypeptide is Phosphoenolpyruvate carboxykinase (ATP) (Pectobacterium atrosepticum (strain SCRI 1043 / ATCC BAA-672) (Erwinia carotovora subsp. atroseptica)).